The chain runs to 495 residues: NADP/NAD-dependent aldehyde dehydrogenase PuuC (495 aa).

244-249 (GSTRTG) contacts NAD(+). Residues glutamate 267 and cysteine 302 contribute to the active site.

This sequence belongs to the aldehyde dehydrogenase family.

The enzyme catalyses an aldehyde + NADP(+) + H2O = a carboxylate + NADPH + 2 H(+). It carries out the reaction an aldehyde + NAD(+) + H2O = a carboxylate + NADH + 2 H(+). The catalysed reaction is 4-(gamma-L-glutamylamino)butanal + NADP(+) + H2O = 4-(gamma-L-glutamylamino)butanoate + NADPH + 2 H(+). It catalyses the reaction 4-(gamma-L-glutamylamino)butanal + NAD(+) + H2O = 4-(gamma-L-glutamylamino)butanoate + NADH + 2 H(+). It functions in the pathway amine and polyamine degradation; putrescine degradation; 4-aminobutanoate from putrescine: step 3/4. Lithium ions exhibits the highest inhibition (97%). To a lesser extent (5-20%), potassium, sodium, and ammonium ions also inhibit PuuC activity. Transition metals, such as copper and zinc ions inhibit PuuC activity by more than 90%. The presence of heavy metals (mercury, silver) or sodium hydrogensulfite in the reaction mixture completely inactivate PuuC; in contrast, disulfide reductants such as DTT and 2-mercaptoethanol significantly increase its activity by 75% and 27%, respectively. Functionally, catalyzes the oxidation of 3-hydroxypropionaldehyde (3-HPA) to 3-hydroxypropionic acid (3-HP). It acts preferentially with NAD but can also use NADP. 3-HPA appears to be the most suitable substrate for PuuC followed by isovaleraldehyde, propionaldehyde, butyraldehyde, and valeraldehyde. It might play a role in propionate and/or acetic acid metabolisms. Also involved in the breakdown of putrescine through the oxidation of gamma-Glu-gamma-aminobutyraldehyde to gamma-Glu-gamma-aminobutyrate (gamma-Glu-GABA). This is NADP/NAD-dependent aldehyde dehydrogenase PuuC from Escherichia coli (strain K12).